The primary structure comprises 437 residues: Succinate--CoA ligase [ADP-forming] subunit beta, hydrogenosomal (437 aa).

The transit peptide at Met1 to Phe27 directs the protein to the hydrogenosome. The 243-residue stretch at Met36–Ala278 folds into the ATP-grasp domain. ATP is bound by residues Lys73, Gly80–Gly82, and Glu141. Asn233 and Asp247 together coordinate Mg(2+). Substrate contacts are provided by residues Asn299 and Gly356–Met358.

It belongs to the succinate/malate CoA ligase beta subunit family. In terms of assembly, heterodimer of an alpha and a beta subunit. The cofactor is Mg(2+).

The protein localises to the hydrogenosome. It carries out the reaction succinate + ATP + CoA = succinyl-CoA + ADP + phosphate. The protein operates within carbohydrate metabolism; tricarboxylic acid cycle; succinate from succinyl-CoA (ligase route): step 1/1. In terms of biological role, succinyl-CoA synthetase functions in the citric acid cycle (TCA), coupling the hydrolysis of succinyl-CoA to the synthesis of ATP and thus represents the only step of substrate-level phosphorylation in the TCA. The beta subunit provides nucleotide specificity of the enzyme and binds the substrate succinate, while the binding sites for coenzyme A and phosphate are found in the alpha subunit. This Neocallimastix frontalis (Rumen fungus) protein is Succinate--CoA ligase [ADP-forming] subunit beta, hydrogenosomal.